A 189-amino-acid polypeptide reads, in one-letter code: Potassium-transporting ATPase KdpC subunit (189 aa).

A helical transmembrane segment spans residues 6–26 (PAILFFIVFTILCGGVYPAVV).

This sequence belongs to the KdpC family. The system is composed of three essential subunits: KdpA, KdpB and KdpC.

The protein resides in the cell inner membrane. In terms of biological role, part of the high-affinity ATP-driven potassium transport (or Kdp) system, which catalyzes the hydrolysis of ATP coupled with the electrogenic transport of potassium into the cytoplasm. This subunit acts as a catalytic chaperone that increases the ATP-binding affinity of the ATP-hydrolyzing subunit KdpB by the formation of a transient KdpB/KdpC/ATP ternary complex. The protein is Potassium-transporting ATPase KdpC subunit of Geotalea uraniireducens (strain Rf4) (Geobacter uraniireducens).